A 218-amino-acid chain; its full sequence is CTP-dependent diacylglycerol kinase 1 (218 aa).

Topologically, residues 1–19 (MSTKLTWSQWSKKHEIPRK) are lumenal. The chain crosses the membrane as a helical span at residues 20–37 (ALHTSIGFFALLLQGCGY). Position 38 (His38) is a topological domain, cytoplasmic. Residues 39 to 59 (AAQIIPVIEIGFIPAFTGDVI) form a helical membrane-spanning segment. Residues 60-88 (RFNWPAFSRLYNRVIGPLMRESEKNAWNG) lie on the Lumenal side of the membrane. Residues 89 to 109 (VIFYMIGVWIVLKVFPEEIAV) form a helical membrane-spanning segment. The Cytoplasmic portion of the chain corresponds to 110 to 142 (MSVLLLSWCDTTASTVGRKWGKYTPKIAKNKSL). Residues 143–163 (AGSLGAFVCGVFCCYVYWGLF) traverse the membrane as a helical segment. The Lumenal portion of the chain corresponds to 164–179 (RTGPDSLAAQSRIPFP). A run of 2 helical transmembrane segments spans residues 180 to 200 (WLCL…VWGL) and 201 to 217 (DDNL…LYLI). Met218 is a topological domain (lumenal).

Belongs to the DGK1 family. It depends on Ca(2+) as a cofactor. Mg(2+) is required as a cofactor.

It localises to the endoplasmic reticulum membrane. The protein resides in the nucleus membrane. The catalysed reaction is a 1,2-diacyl-sn-glycerol + CTP = a 1,2-diacyl-sn-glycero-3-phosphate + CDP + H(+). In terms of biological role, CTP-dependent diacylglycerol kinase that catalyzes the phosphorylation of diacylglycerol (DAG) to phosphatidate (PA). Controls phosphatidate levels at the nuclear envelope. Counteracts the activity of PA phosphatase ned1. May be involved in vesicle trafficking between the endoplasmic reticulum and the Golgi apparatus. Involved in pre-tRNA splicing. In Schizosaccharomyces pombe (strain 972 / ATCC 24843) (Fission yeast), this protein is CTP-dependent diacylglycerol kinase 1 (ptp4).